Reading from the N-terminus, the 139-residue chain is Small ribosomal subunit protein uS12 (139 aa).

A disordered region spans residues 1-55; it reads MPTINQLIRKGRKAKVKKSDSPALNKGYNSFKKVQTDLSSPQKRGVCTRVGTMTP. Polar residues predominate over residues 32–42; it reads KKVQTDLSSPQ.

It belongs to the universal ribosomal protein uS12 family. Part of the 30S ribosomal subunit. Contacts proteins S8 and S17. May interact with IF1 in the 30S initiation complex.

Its function is as follows. With S4 and S5 plays an important role in translational accuracy. Interacts with and stabilizes bases of the 16S rRNA that are involved in tRNA selection in the A site and with the mRNA backbone. Located at the interface of the 30S and 50S subunits, it traverses the body of the 30S subunit contacting proteins on the other side and probably holding the rRNA structure together. The combined cluster of proteins S8, S12 and S17 appears to hold together the shoulder and platform of the 30S subunit. The protein is Small ribosomal subunit protein uS12 of Halalkalibacterium halodurans (strain ATCC BAA-125 / DSM 18197 / FERM 7344 / JCM 9153 / C-125) (Bacillus halodurans).